The chain runs to 352 residues: DNA polymerase IV (352 aa).

A UmuC domain is found at Ile4 to Gly185. Mg(2+) contacts are provided by Asp8 and Asp103. The active site involves Glu104.

This sequence belongs to the DNA polymerase type-Y family. As to quaternary structure, monomer. The cofactor is Mg(2+).

It localises to the cytoplasm. It carries out the reaction DNA(n) + a 2'-deoxyribonucleoside 5'-triphosphate = DNA(n+1) + diphosphate. Poorly processive, error-prone DNA polymerase involved in untargeted mutagenesis. Copies undamaged DNA at stalled replication forks, which arise in vivo from mismatched or misaligned primer ends. These misaligned primers can be extended by PolIV. Exhibits no 3'-5' exonuclease (proofreading) activity. May be involved in translesional synthesis, in conjunction with the beta clamp from PolIII. In Enterobacter sp. (strain 638), this protein is DNA polymerase IV.